A 453-amino-acid polypeptide reads, in one-letter code: Trigger factor (453 aa).

The PPIase FKBP-type domain occupies 171–256 (GDRVTISFKG…ATVLEAPQES (86 aa)).

Belongs to the FKBP-type PPIase family. Tig subfamily.

The protein resides in the cytoplasm. It carries out the reaction [protein]-peptidylproline (omega=180) = [protein]-peptidylproline (omega=0). Functionally, involved in protein export. Acts as a chaperone by maintaining the newly synthesized protein in an open conformation. Functions as a peptidyl-prolyl cis-trans isomerase. The sequence is that of Trigger factor from Rhodopseudomonas palustris (strain BisB18).